Consider the following 457-residue polypeptide: tRNA modification GTPase MnmE (457 aa).

Positions 24, 81, and 121 each coordinate (6S)-5-formyl-5,6,7,8-tetrahydrofolate. The 163-residue stretch at 218–380 folds into the TrmE-type G domain; sequence GIKIVITGKP…LLKYLTKIIS (163 aa). Residue Asn228 participates in K(+) binding. Residues 228-233, 247-253, 272-275, and 338-341 contribute to the GTP site; these read NVGKSS, TNIAGTT, DTAG, and NKAD. Ser232 lines the Mg(2+) pocket. Positions 247, 249, and 252 each coordinate K(+). Thr253 contacts Mg(2+). Lys457 serves as a coordination point for (6S)-5-formyl-5,6,7,8-tetrahydrofolate.

Belongs to the TRAFAC class TrmE-Era-EngA-EngB-Septin-like GTPase superfamily. TrmE GTPase family. In terms of assembly, homodimer. Heterotetramer of two MnmE and two MnmG subunits. K(+) serves as cofactor.

The protein resides in the cytoplasm. In terms of biological role, exhibits a very high intrinsic GTPase hydrolysis rate. Involved in the addition of a carboxymethylaminomethyl (cmnm) group at the wobble position (U34) of certain tRNAs, forming tRNA-cmnm(5)s(2)U34. The polypeptide is tRNA modification GTPase MnmE (Baumannia cicadellinicola subsp. Homalodisca coagulata).